Consider the following 1281-residue polypeptide: Dynactin subunit 1 (1281 aa).

Residues 1 to 26 (MAQSRRHMSSRTPSGSRMSTEASARP) form a disordered region. Positions 10–22 (SRTPSGSRMSTEA) are enriched in polar residues. Positions 48–90 (GATLFATGKWVGVILDEAKGKNDGTVQGRKYFTCDEGHGIFVR) constitute a CAP-Gly domain. The segment at 100-221 (GADTTSPETP…SPSKEEEGLR (122 aa)) is disordered. Polar residues predominate over residues 102–114 (DTTSPETPDSSAS). Residues Thr108, Thr145, Thr146, and Thr147 each carry the phosphothreonine modification. The span at 129-152 (SKLRGLKPKKAPTARKTTTRRPKP) shows a compositional bias: basic residues. Over residues 161–205 (AGPSSSLGPSGSASAGELSSSEPSTPAQTPLAAPIIPTPALTSPG) the composition is skewed to low complexity. Ser179 carries the post-translational modification Phosphoserine; by PLK1. Ser212 is modified (phosphoserine; by CDK1). Coiled-coil stretches lie at residues 214 to 547 (SKEE…RQQQ), 943 to 1049 (LKLE…EGLR), and 1185 to 1214 (SAQL…KETV). The interaction with HPS6 stretch occupies residues 911–1281 (EYDAERPPSK…LHQLHSRLIS (371 aa)).

It belongs to the dynactin 150 kDa subunit family. In terms of assembly, monomer and homodimer. Subunit of dynactin, a multiprotein complex part of a tripartite complex with dynein and a adapter, such as BICDL1, BICD2 or HOOK3. The dynactin complex is built around ACTR1A/ACTB filament and consists of an actin-related filament composed of a shoulder domain, a pointed end and a barbed end. Its length is defined by its flexible shoulder domain. The soulder is composed of 2 DCTN1 subunits, 4 DCTN2 and 2 DCTN3. DCTN1/p150(glued) binds directly to microtubules and to cytoplasmic dynein. The 4 DCNT2 (via N-terminus) bind the ACTR1A filament and act as molecular rulers to determine the length. The pointed end is important for binding dynein-dynactin cargo adapters. Consists of 4 subunits: ACTR10, DCNT4, DCTN5 and DCTN6. The barbed end is composed of a CAPZA1:CAPZB heterodimers, which binds ACTR1A/ACTB filament and dynactin and stabilizes dynactin. Interacts with the C-terminus of MAPRE1, MAPRE2 and MAPRE3. Interacts with FBXL5. Interacts with ECPAS. Interacts with CLIP1. Interacts with CLN3 and DYNAP. Interacts with MISP; this interaction regulates its distribution at the cell cortex. Interacts with CEP131. Interacts with CEP126. Interacts with dynein intermediate chain and dynein heavy chain. Interacts with PLK1 (via POLO-box domain). Interacts with TBCB and PARD6A. Binds preferentially to tyrosinated microtubules than to detyrosinated microtubules. Interacts with KIF3A. Interacts with HPS6. Interacts with SNX6. Interacts with BICD2. Interacts with DST (isoform 1). Identified in a complex with MREG and RILP. Interacts with BCCIP. Interacts with DCDC1. Interacts with AKNA. Interacts with DYNC1I2. Interacts with RUFY3 and RUFY4. In terms of processing, ubiquitinated by a SCF complex containing FBXL5, leading to its degradation by the proteasome. Post-translationally, phosphorylation by SLK at Thr-145, Thr-146 and Thr-147 targets DCTN1 to the centrosome. It is uncertain if SLK phosphorylates all three threonines or one or two of them. PLK1-mediated phosphorylation at Ser-179 is essential for its localization in the nuclear envelope and promotes its dissociation from microtubules during early mitosis and positively regulates nuclear envelope breakdown during prophase.

The protein localises to the cytoplasm. The protein resides in the cytoskeleton. It localises to the microtubule organizing center. It is found in the centrosome. Its subcellular location is the centriole. The protein localises to the spindle. The protein resides in the nucleus envelope. It localises to the cell cortex. Functionally, part of the dynactin complex that activates the molecular motor dynein for ultra-processive transport along microtubules. Plays a key role in dynein-mediated retrograde transport of vesicles and organelles along microtubules by recruiting and tethering dynein to microtubules. Binds to both dynein and microtubules providing a link between specific cargos, microtubules and dynein. Essential for targeting dynein to microtubule plus ends, recruiting dynein to membranous cargos and enhancing dynein processivity (the ability to move along a microtubule for a long distance without falling off the track). Can also act as a brake to slow the dynein motor during motility along the microtubule. Can regulate microtubule stability by promoting microtubule formation, nucleation and polymerization and by inhibiting microtubule catastrophe in neurons. Inhibits microtubule catastrophe by binding both to microtubules and to tubulin, leading to enhanced microtubule stability along the axon. Plays a role in metaphase spindle orientation. Plays a role in centriole cohesion and subdistal appendage organization and function. Its recruitment to the centriole in a KIF3A-dependent manner is essential for the maintenance of centriole cohesion and the formation of subdistal appendage. Also required for microtubule anchoring at the mother centriole. Plays a role in primary cilia formation. The polypeptide is Dynactin subunit 1 (Dctn1) (Mus musculus (Mouse)).